Consider the following 89-residue polypeptide: Co-chaperonin GroES (89 aa).

This sequence belongs to the GroES chaperonin family. Heptamer of 7 subunits arranged in a ring. Interacts with the chaperonin GroEL.

The protein resides in the cytoplasm. Together with the chaperonin GroEL, plays an essential role in assisting protein folding. The GroEL-GroES system forms a nano-cage that allows encapsulation of the non-native substrate proteins and provides a physical environment optimized to promote and accelerate protein folding. GroES binds to the apical surface of the GroEL ring, thereby capping the opening of the GroEL channel. This is Co-chaperonin GroES from Kosmotoga olearia (strain ATCC BAA-1733 / DSM 21960 / TBF 19.5.1).